We begin with the raw amino-acid sequence, 442 residues long: MSNSVNSSKYQPLTTRQGDRIAVVSGIRTPFAKQSTAFSTTPAVDLGKLAVKALMDKTDIDPKLIDQVVFGQVVQMPEAPNIAREIVLGTGMNIGTDAYSVTRACATSFQTTANVVESIMAGTIDIGIAGGADSSSVLPIGVSKKLASTLLALSKTKTVYQKLSLLRTLSLKDIAPVPPAVAEYSTGISMGQTAEQMAKSHGITREEQDALAHRSHTLAAKAWKDGLIQDEVMTAFPEPYTAWLDHDNNIRHDSDLASYAKLRPAFDHKYGSVTAANSTPLTDGGAALLLMSEKRAKELGYEPLGYIRSFAFSAIDVHHDMLMGPSYATPMALDKAGISLSDLTLIDMHEAFAAQTLSNVKMFASNKFAKEYLGRDKAIGEIDMEKFNVLGGSIAYGHPFAATGARMIIQTLRELKRRGGGLGLNTACAAGGLGAAMVLEVE.

The active-site Acyl-thioester intermediate is Cys-105. Catalysis depends on proton acceptor residues His-398 and Cys-428.

Belongs to the thiolase-like superfamily. Thiolase family. Heterotetramer of two alpha chains (FadJ) and two beta chains (FadI).

Its subcellular location is the cytoplasm. It carries out the reaction an acyl-CoA + acetyl-CoA = a 3-oxoacyl-CoA + CoA. It participates in lipid metabolism; fatty acid beta-oxidation. Catalyzes the final step of fatty acid oxidation in which acetyl-CoA is released and the CoA ester of a fatty acid two carbons shorter is formed. In Aliivibrio fischeri (strain ATCC 700601 / ES114) (Vibrio fischeri), this protein is 3-ketoacyl-CoA thiolase.